The following is a 612-amino-acid chain: Breast cancer type 1 susceptibility protein homolog (612 aa).

The segment at 21–61 (CGICCSTYKDPILSTCFHIFCRSCINACFERKRKVQCPICR) adopts an RING-type zinc-finger fold. Residues 140 to 173 (RRKRPSRPQPPSAFAEEPAEPVEPPEPATKQPVE) form a disordered region. 2 BRCT domains span residues 415-477 (RFAE…DYTI) and 505-603 (EHGK…PYKA).

As to quaternary structure, heterodimer (via RING-type zinc finger) with brd-1 to form the core CeBCD complex. Brc-1-brd-1 heterodimer-containing CeBCD complexes bound to chromatin are activated as an E3-ubiquitin ligase in response to DNA damage. The heterodimer interacts with the recombinase rad-51 following ionizing irradiation; the interaction is direct. The heterodimer interacts the E2-ubiquitin-conjugating enzyme let-70 following ionizing irradiation. The heterodimer interacts with the pro-crossover proteins msh-5 and syp-3. Post-translationally, phosphorylation of CeBCD complexes is required for E3 ubiquitin-protein ligase activity.

The protein resides in the nucleus. Its subcellular location is the chromosome. It localises to the cytoplasm. It carries out the reaction S-ubiquitinyl-[E2 ubiquitin-conjugating enzyme]-L-cysteine + [acceptor protein]-L-lysine = [E2 ubiquitin-conjugating enzyme]-L-cysteine + N(6)-ubiquitinyl-[acceptor protein]-L-lysine.. It functions in the pathway protein modification; protein ubiquitination. With respect to regulation, E3 ubiquitin-protein ligase activity of CeBCD complexes occurs at DNA damage sites. Following DNA damage, E3 ubiquitin-protein ligase activity is reduced by caffeine treatment (inhibitor of ATM and ATK kinase activity). Functionally, E3 ubiquitin-protein ligase that specifically mediates the formation of polyubiquitin chains and plays a central role in DNA repair. Plays a role in triggering cellular responses at damage sites in response to DNA damage that may be induced by UV and ionizing radiation for example. Functions in double-strand break repair, and is required for homologous recombination between sister chromatids in meiotic and mitotic cells. In particular, protects against chromosome non-disjunction and nuclear fragmentation during meiotic double-strand break repair to ensure sister chromatid recombination and aid chromosome stability. Required for normal cell cycle progression. Along with brap-2 modulates the expression of cell cycle arrest protein cki-1 in response to increased levels of reactive oxygen species. Constituent of the CeBCD complex that possesses E3 ubiquitin-protein ligase activity. When bound to chromatin, the brc-1-brd-1 heterodimer within the CeBCD complex is inactive during normal conditions, but in response to DNA damage, the brc-1-brd-1 heterodimer associates with other proteins such as the recombinase rad-51 or the E2-ubiquitin-conjugating enzyme let-70, which activate the CeBCD complex as an E3-ubiquitin ligase. Moreover, association between the brc-1-brd-1 heterodimer and rad-51 and let-70, probably requires DNA checkpoint proteins such as atl-1 and mre-11 in order to induce ubiquitination at DNA damage sites. To this end, the brc-1-brd-1 heterodimer coordinates a diverse range of cellular pathways such as DNA damage repair, ubiquitination and transcriptional regulation to maintain genomic stability. The chain is Breast cancer type 1 susceptibility protein homolog from Caenorhabditis elegans.